A 341-amino-acid chain; its full sequence is Basic membrane protein B (341 aa).

The signal sequence occupies residues 1 to 14 (MRIVIFIFGILLTS). A lipid anchor (N-palmitoyl cysteine) is attached at Cys15. The S-diacylglycerol cysteine moiety is linked to residue Cys15.

The protein belongs to the BMP lipoprotein family. Monomer.

It is found in the cell inner membrane. In terms of biological role, may be part of an ABC-type nucleoside uptake system involved in the purine salvage pathway. The sequence is that of Basic membrane protein B (bmpB) from Borreliella burgdorferi (strain ATCC 35210 / DSM 4680 / CIP 102532 / B31) (Borrelia burgdorferi).